Reading from the N-terminus, the 157-residue chain is Endoribonuclease YbeY (157 aa).

Residues H114, H118, and H124 each contribute to the Zn(2+) site.

This sequence belongs to the endoribonuclease YbeY family. Zn(2+) serves as cofactor.

It is found in the cytoplasm. In terms of biological role, single strand-specific metallo-endoribonuclease involved in late-stage 70S ribosome quality control and in maturation of the 3' terminus of the 16S rRNA. The protein is Endoribonuclease YbeY of Yersinia pseudotuberculosis serotype O:3 (strain YPIII).